The following is a 337-amino-acid chain: Outer membrane protein U (337 aa).

The first 21 residues, 1-21, serve as a signal peptide directing secretion; the sequence is MKKTLIALSVSAAAMATGVNA.

The protein belongs to the Gram-negative porin family. In terms of assembly, homotrimer.

The protein localises to the cell outer membrane. Forms pores that allow passive diffusion of small molecules across the outer membrane. The protein is Outer membrane protein U (ompU) of Vibrio parahaemolyticus serotype O3:K6 (strain RIMD 2210633).